Here is an 853-residue protein sequence, read N- to C-terminus: DNA mismatch repair protein MutS (853 aa).

ATP is bound at residue 614–621; the sequence is GPNMGGKS.

This sequence belongs to the DNA mismatch repair MutS family.

In terms of biological role, this protein is involved in the repair of mismatches in DNA. It is possible that it carries out the mismatch recognition step. This protein has a weak ATPase activity. This Enterobacter sp. (strain 638) protein is DNA mismatch repair protein MutS.